Reading from the N-terminus, the 357-residue chain is Beta-hexosaminidase (357 aa).

Residues D66, R74, R140, and 170-171 (KH) each bind substrate. H183 acts as the Proton donor/acceptor in catalysis. D254 serves as the catalytic Nucleophile.

Belongs to the glycosyl hydrolase 3 family. NagZ subfamily.

The protein localises to the cytoplasm. It catalyses the reaction Hydrolysis of terminal non-reducing N-acetyl-D-hexosamine residues in N-acetyl-beta-D-hexosaminides.. Its pathway is cell wall biogenesis; peptidoglycan recycling. Its function is as follows. Plays a role in peptidoglycan recycling by cleaving the terminal beta-1,4-linked N-acetylglucosamine (GlcNAc) from peptide-linked peptidoglycan fragments, giving rise to free GlcNAc, anhydro-N-acetylmuramic acid and anhydro-N-acetylmuramic acid-linked peptides. This is Beta-hexosaminidase from Chromobacterium violaceum (strain ATCC 12472 / DSM 30191 / JCM 1249 / CCUG 213 / NBRC 12614 / NCIMB 9131 / NCTC 9757 / MK).